The chain runs to 918 residues: Calcium-transporting ATPase type 2C member 1 (918 aa).

The Cytoplasmic segment spans residues 1 to 75 (MKVARFQKIP…SEDEPLWKKY (75 aa)). Residues 76–96 (ISQFKNPLIMLLLASAVISVL) form a helical membrane-spanning segment. Residues 97–98 (MH) are Extracellular-facing. A helical membrane pass occupies residues 99-119 (QFDDAVSITVAILIVVTVAFV). Residues 120–267 (QEYRSEKSLE…LQKSMDLLGK (148 aa)) are Cytoplasmic-facing. Residues 268 to 288 (QLSFYSFGIIGIIMLVGWLLG) traverse the membrane as a helical segment. Residues 289–302 (KDILEMFTISVSLA) are Extracellular-facing. Residues 303-323 (VAAIPEGLPIVVTVTLALGVM) traverse the membrane as a helical segment. Over 324-703 (RMVKKRAIVK…IYNNIKNFVR (380 aa)) the chain is Cytoplasmic. Catalysis depends on D350, which acts as the 4-aspartylphosphate intermediate. Positions 643 and 647 each coordinate Mg(2+). The helical transmembrane segment at 704–724 (FQLSTSIAALTLISLATLMNF) threads the bilayer. Over 725–732 (PNPLNAMQ) the chain is Extracellular. A helical transmembrane segment spans residues 733-753 (ILWINIIMDGPPAQSLGVEPV). The Cytoplasmic segment spans residues 754–773 (DKDVIRKPPRNWKDSILTKN). Residues 774 to 794 (LILKILVSSIIIVCGTLFVFW) traverse the membrane as a helical segment. Residues 795–842 (RELRDNVITPRDTTMTFTCFVFFDMFNALSSRSQTKSVFEIGLCSNKM) lie on the Extracellular side of the membrane. Residues 843–863 (FCYAVLGSIMGQLLVIYFPPL) traverse the membrane as a helical segment. The Cytoplasmic portion of the chain corresponds to 864–873 (QKVFQTESLS). Residues 874-894 (ILDLLFLLGLTSSVCIVAEII) traverse the membrane as a helical segment. At 895–918 (KKVERSREKIQKHVSSTSSSFLEV) the chain is on the extracellular side.

The protein belongs to the cation transport ATPase (P-type) (TC 3.A.3) family. Type IIA subfamily. Monomer. Homodimer.

Its subcellular location is the golgi apparatus. The protein resides in the trans-Golgi network membrane. It is found in the golgi stack membrane. The catalysed reaction is Ca(2+)(in) + ATP + H2O = Ca(2+)(out) + ADP + phosphate + H(+). The enzyme catalyses Mn(2+)(in) + ATP + H2O = Mn(2+)(out) + ADP + phosphate + H(+). Its function is as follows. ATP-driven pump that supplies the Golgi apparatus with Ca(2+) and Mn(2+) ions, both essential cofactors for processing and trafficking of newly synthesized proteins in the secretory pathway. Within a catalytic cycle, acquires Ca(2+) or Mn(2+) ions on the cytoplasmic side of the membrane and delivers them to the lumenal side. The transfer of ions across the membrane is coupled to ATP hydrolysis and is associated with a transient phosphorylation that shifts the pump conformation from inward-facing to outward-facing state. Plays a primary role in the maintenance of Ca(2+) homeostasis in the trans-Golgi compartment with a functional impact on Golgi and post-Golgi protein sorting as well as a structural impact on cisternae morphology. Responsible for loading the Golgi stores with Ca(2+) ions in keratinocytes, contributing to keratinocyte differentiation and epidermis integrity. Participates in Ca(2+) and Mn(2+) ions uptake into the Golgi store of hippocampal neurons and regulates protein trafficking required for neural polarity. May also play a role in the maintenance of Ca(2+) and Mn(2+) homeostasis and signaling in the cytosol while preventing cytotoxicity. This is Calcium-transporting ATPase type 2C member 1 (ATP2C1) from Pongo abelii (Sumatran orangutan).